The chain runs to 374 residues: Carbamoyl phosphate synthase small chain (374 aa).

Residues 1–186 (MTEPAILVLE…DRNEWKRAAP (186 aa)) form a CPSase region. 3 residues coordinate L-glutamine: Ser47, Gly237, and Gly239. The 186-residue stretch at 189–374 (KVVAYDYGVK…RFITMMAAQS (186 aa)) folds into the Glutamine amidotransferase type-1 domain. Catalysis depends on Cys265, which acts as the Nucleophile. L-glutamine contacts are provided by Leu266, Gln269, Asn307, Gly309, and Phe310. Catalysis depends on residues His349 and Glu351.

Belongs to the CarA family. Composed of two chains; the small (or glutamine) chain promotes the hydrolysis of glutamine to ammonia, which is used by the large (or ammonia) chain to synthesize carbamoyl phosphate. Tetramer of heterodimers (alpha,beta)4.

It catalyses the reaction hydrogencarbonate + L-glutamine + 2 ATP + H2O = carbamoyl phosphate + L-glutamate + 2 ADP + phosphate + 2 H(+). The enzyme catalyses L-glutamine + H2O = L-glutamate + NH4(+). The protein operates within amino-acid biosynthesis; L-arginine biosynthesis; carbamoyl phosphate from bicarbonate: step 1/1. It functions in the pathway pyrimidine metabolism; UMP biosynthesis via de novo pathway; (S)-dihydroorotate from bicarbonate: step 1/3. Small subunit of the glutamine-dependent carbamoyl phosphate synthetase (CPSase). CPSase catalyzes the formation of carbamoyl phosphate from the ammonia moiety of glutamine, carbonate, and phosphate donated by ATP, constituting the first step of 2 biosynthetic pathways, one leading to arginine and/or urea and the other to pyrimidine nucleotides. The small subunit (glutamine amidotransferase) binds and cleaves glutamine to supply the large subunit with the substrate ammonia. The polypeptide is Carbamoyl phosphate synthase small chain (Xylella fastidiosa (strain 9a5c)).